A 640-amino-acid polypeptide reads, in one-letter code: Threonine--tRNA ligase (640 aa).

Residues 1–61 (MPIITLPDGN…EKDSEVNIIT (61 aa)) form the TGS domain. Residues 242–533 (DHRRIAKQMS…LIEHYAGRMP (292 aa)) are catalytic. Residues C333, H384, and H510 each contribute to the Zn(2+) site.

Belongs to the class-II aminoacyl-tRNA synthetase family. In terms of assembly, homodimer. Requires Zn(2+) as cofactor.

Its subcellular location is the cytoplasm. It catalyses the reaction tRNA(Thr) + L-threonine + ATP = L-threonyl-tRNA(Thr) + AMP + diphosphate + H(+). Functionally, catalyzes the attachment of threonine to tRNA(Thr) in a two-step reaction: L-threonine is first activated by ATP to form Thr-AMP and then transferred to the acceptor end of tRNA(Thr). Also edits incorrectly charged L-seryl-tRNA(Thr). This Prochlorococcus marinus (strain MIT 9303) protein is Threonine--tRNA ligase.